Reading from the N-terminus, the 758-residue chain is Vitamin K-dependent gamma-carboxylase (758 aa).

A disordered region spans residues 1–34; sequence MAVSARPARAPRGSDKVKKDKAAQTSGPRQGSRM. Residue alanine 2 is modified to N-acetylalanine. Residues 2-60 are Cytoplasmic-facing; it reads AVSARPARAPRGSDKVKKDKAAQTSGPRQGSRMGKLLGFEWTDVSSWERLVTLLNRPTD. Residues 12 to 22 are compositionally biased toward basic and acidic residues; that stretch reads RGSDKVKKDKA. A helical transmembrane segment spans residues 61–81; the sequence is PAGLAVFRFLFGLMMVLDIPQ. At 82–113 the chain is on the lumenal side; it reads ERGLSSLDRRYLDGLEVCRFPLLDALQPLPLD. Cysteine 99 and cysteine 450 form a disulfide bridge. Residues 114–134 form a helical membrane-spanning segment; it reads WMYLIYTIMFLGALGMMLGLC. Residues 135–136 lie on the Cytoplasmic side of the membrane; that stretch reads YR. The chain crosses the membrane as a helical span at residues 137–157; sequence ISCVLFLLPYWYVFLLDKTSW. Topologically, residues 158–292 are lumenal; it reads NNHSYLYGLL…VSYFHCMNSQ (135 aa). Residues 293-313 form a helical membrane-spanning segment; that stretch reads LFSIGMFPYVMLASSPLFCSP. Residues 314–363 lie on the Cytoplasmic side of the membrane; the sequence is EWPRKLVAHCPKKLQELLPLRTAPQPSTSCMYKRSRARGSQKPGLRHKLS. The helical transmembrane segment at 364–384 threads the bilayer; the sequence is TAFTLLYLLEQLFLPYSHFLT. Topologically, residues 385 to 758 are lumenal; sequence QGYNNWTNGL…PDSHPVHSEF (374 aa). The tract at residues 727-758 is disordered; it reads PFEPAGEPSPVNTDSSNPNPPEPDSHPVHSEF. A compositionally biased stretch (basic and acidic residues) spans 749 to 758; that stretch reads PDSHPVHSEF.

Monomer. May interact with CALU. Post-translationally, the N-terminus is blocked.

Its subcellular location is the endoplasmic reticulum membrane. The catalysed reaction is 4-carboxy-L-glutamyl-[protein] + 2,3-epoxyphylloquinone + H2O + H(+) = phylloquinol + L-glutamyl-[protein] + CO2 + O2. Its function is as follows. Mediates the vitamin K-dependent carboxylation of glutamate residues to calcium-binding gamma-carboxyglutamate (Gla) residues with the concomitant conversion of the reduced hydroquinone form of vitamin K to vitamin K epoxide. Catalyzes gamma-carboxylation of various proteins, such as blood coagulation factors (F2, F7, F9 and F10), osteocalcin (BGLAP) or matrix Gla protein (MGP). This is Vitamin K-dependent gamma-carboxylase (GGCX) from Bos taurus (Bovine).